The primary structure comprises 377 residues: 3-dehydroquinate synthase (377 aa).

Residues 115–119, 139–140, K152, and K161 each bind NAD(+); these read GVIGD and TS. Residues E194, H256, and H275 each contribute to the Zn(2+) site.

The protein belongs to the sugar phosphate cyclases superfamily. Dehydroquinate synthase family. The cofactor is NAD(+). It depends on Co(2+) as a cofactor. Zn(2+) is required as a cofactor.

Its subcellular location is the cytoplasm. It carries out the reaction 7-phospho-2-dehydro-3-deoxy-D-arabino-heptonate = 3-dehydroquinate + phosphate. It participates in metabolic intermediate biosynthesis; chorismate biosynthesis; chorismate from D-erythrose 4-phosphate and phosphoenolpyruvate: step 2/7. Functionally, catalyzes the conversion of 3-deoxy-D-arabino-heptulosonate 7-phosphate (DAHP) to dehydroquinate (DHQ). This is 3-dehydroquinate synthase from Agrobacterium fabrum (strain C58 / ATCC 33970) (Agrobacterium tumefaciens (strain C58)).